The following is a 421-amino-acid chain: 3-isopropylmalate dehydratase large subunit (421 aa).

Residues Cys300, Cys360, and Cys363 each coordinate [4Fe-4S] cluster.

The protein belongs to the aconitase/IPM isomerase family. LeuC type 2 subfamily. As to quaternary structure, heterodimer of LeuC and LeuD. It depends on [4Fe-4S] cluster as a cofactor.

The catalysed reaction is (2R,3S)-3-isopropylmalate = (2S)-2-isopropylmalate. It functions in the pathway amino-acid biosynthesis; L-leucine biosynthesis; L-leucine from 3-methyl-2-oxobutanoate: step 2/4. Catalyzes the isomerization between 2-isopropylmalate and 3-isopropylmalate, via the formation of 2-isopropylmaleate. The chain is 3-isopropylmalate dehydratase large subunit from Lachnoclostridium phytofermentans (strain ATCC 700394 / DSM 18823 / ISDg) (Clostridium phytofermentans).